A 580-amino-acid chain; its full sequence is Type 3 secretion system translocon protein SctE (580 aa).

2 helical membrane-spanning segments follow: residues isoleucine 313–serine 333 and isoleucine 399–valine 419.

Belongs to the SctE/SipB/YopB family. The core secretion machinery of the T3SS is composed of approximately 20 different proteins, including cytoplasmic components, a base, an export apparatus and a needle. This subunit is involved in the formation of a pore, called the translocon, in host membrane.

It is found in the secreted. The protein resides in the host membrane. In terms of biological role, component of the type III secretion system (T3SS), also called injectisome, which is used to inject bacterial effector proteins into eukaryotic host cells. IpaB/SctE and IpaC/SctB are inserted into the host membrane where they form a pore and allow the translocation of effector proteins into the cytosol of target cells. The protein is Type 3 secretion system translocon protein SctE of Shigella dysenteriae.